Here is a 1180-residue protein sequence, read N- to C-terminus: MSVKSPFNVMSRNNLEAPPCKMTEPFNFEKNENKLPPHESLRSPGTLPNHPNFRLKSSENGNKKNNFLLCEQTKQYLASQEDNSVSSNPNGINGEVVGSKGDRKKLPAGNSVSPPSAESNSPPKEVNIKPGNNVRPAKSKKLNKLVENSLSISNPGLFTSLGPPLRSTTCHRCGLFGSLRCSQCKQTYYCSTACQRRDWSAHSIVCRPVQPNFHKLENKSSIETKDVEVNNKSDCPLGVTKEIAIWAERIMFSDLRSLQLKKTMEIKGTVTEFKHPGDFYVQLYSSEVLEYMNQLSASLKETYANVHEKDYIPVKGEVCIAKYTVDQTWNRAIIQNVDVQQKKAHVLYIDYGNEEIIPLNRIYHLNRNIDLFPPCAIKCFVANVIPAEGNWSSDCIKATKPLLMEQYCSIKIVDILEEEVVTFAVEVELPNSGKLLDHVLIEMGYGLKPSGQDSKKENADQSDPEDVGKMTTENNIVVDKSDLIPKVLTLNVGDEFCGVVAHIQTPEDFFCQQLQSGRKLAELQASLSKYCDQLPPRSDFYPAIGDICCAQFSEDDQWYRASVLAYASEESVLVGYVDYGNFEILSLMRLCPIIPKLLELPMQAIKCVLAGVKPSLGIWTPEAICLMKKLVQNKIITVKVVDKLENSSLVELIDKSETPHVSVSKVLLDAGFAVGEQSMVTDKPSDVKETSVPLGVEGKVNPLEWTWVELGVDQTVDVVVCVIYSPGEFYCHVLKEDALKKLNDLNKSLAEHCQQKLPNGFKAEIGQPCCAFFAGDGSWYRALVKEILPNGHVKVHFVDYGNIEEVTADELRMISSTFLNLPFQGIRCQLADIQSRNKHWSEEAITRFQMCVAGIKLQARVVEVTENGIGVELTDLSTCYPRIISDVLIDEHLVLKSASPHKDLPNDRLVNKHELQVHVQGLQATSSAEQWKTIELPVDKTIQANVLEIISPNLFYALPKGMPENQEKLCMLTAELLEYCNAPKSRPPYRPRIGDACCAKYTSDDFWYRAVVLGTSDTDVEVLYADYGNIETLPLCRVQPITSSHLALPFQIIRCSLEGLMELNGSSSQLIIMLLKNFMLNQNVMLSVKGITKNVHTVSVEKCSENGTVDVADKLVTFGLAKNITPQRQSALNTEKMYRMNCCCTELQKQVEKHEHILLFLLNNSTNQNKFIEMKKLLKS.

Disordered regions lie at residues 1–66 and 79–138; these read MSVK…KKNN and SQED…RPAK. The span at 27–41 shows a compositional bias: basic and acidic residues; that stretch reads NFEKNENKLPPHESL. Polar residues-rich tracts occupy residues 79–91 and 110–122; these read SQED…NPNG and NSVS…SNSP. Cys-170, Cys-173, Cys-181, Cys-184, Cys-190, Cys-194, His-202, and Cys-206 together coordinate Zn(2+). The MYND-type zinc-finger motif lies at 170–206; sequence CHRCGLFGSLRCSQCKQTYYCSTACQRRDWSAHSIVC. Positions 312 to 372 constitute a Tudor 1 domain; that stretch reads IPVKGEVCIA…YHLNRNIDLF (61 aa). The interval 450 to 469 is disordered; that stretch reads SGQDSKKENADQSDPEDVGK. 3 consecutive Tudor domains span residues 541–600, 762–821, and 990–1048; these read YPAI…LLEL, KAEI…FLNL, and RPRI…HLAL.

Belongs to the TDRD1 family. Found in a mRNP complex, at least composed of TDRD1, TDRD6, TDRD7 and DDX4. Interacts with MAEL. Interacts with PIWIL1, PIWIL2 and PIWIL4 (when methylated on arginine residues). Interacts with TDRD12. As to expression, testis and ovary specific. Also expressed in several cancers.

It localises to the cytoplasm. Plays a central role during spermatogenesis by participating in the repression transposable elements and preventing their mobilization, which is essential for the germline integrity. Acts via the piRNA metabolic process, which mediates the repression of transposable elements during meiosis by forming complexes composed of piRNAs and Piwi proteins and governs the methylation and subsequent repression of transposons. Required for the localization of Piwi proteins to the meiotic nuage. Involved in the piRNA metabolic process by ensuring the entry of correct transcripts into the normal piRNA pool and limiting the entry of cellular transcripts into the piRNA pathway. May act by allowing the recruitment of piRNA biogenesis or loading factors that ensure the correct entry of transcripts and piRNAs into Piwi proteins. This is Tudor domain-containing protein 1 (TDRD1) from Homo sapiens (Human).